A 210-amino-acid polypeptide reads, in one-letter code: Kinetochore protein Spc25 (210 aa).

Residues 42 to 106 (TMENIKRQQH…KKKQERDKLI (65 aa)) are a coiled coil.

The protein belongs to the SPC25 family. As to quaternary structure, component of the Ndc80 complex, which is composed of Ndc80, Nuf2 and Spc25.

It localises to the nucleus. It is found in the chromosome. The protein localises to the centromere. The protein resides in the kinetochore. In terms of biological role, acts as a component of the essential kinetochore-associated Ndc80 complex, which is required for chromosome segregation and spindle checkpoint activity during meiosis and mitosis. Required for kinetochore integrity and the organization of stable microtubule binding sites in the outer plate of the kinetochore. Participates in SAC signaling that responds specifically to disruptions in spindle microtubule dynamics. The NDC80 complex synergistically enhances the affinity of the SKA1 complex for microtubules and may allow the NDC80 complex to track depolymerizing microtubules. This Drosophila virilis (Fruit fly) protein is Kinetochore protein Spc25.